A 178-amino-acid polypeptide reads, in one-letter code: Endothelin-2 (178 aa).

An N-terminal signal peptide occupies residues 1–24; the sequence is MVAVPTAWCSVALALLLALQEGKG. Residues 25-46 constitute a propeptide that is removed on maturation; the sequence is QVAAAPDHPAPSPRARGSHLRP. 2 cysteine pairs are disulfide-bonded: C49–C63 and C51–C59. Residues 70-178 constitute a propeptide that is removed on maturation; it reads VNTPGQTAPY…RPMYPRRRKT (109 aa). The tract at residues 96–111 is endothelin-like; that stretch reads CECSSSGDPACATFCH. Positions 158–178 are disordered; it reads ARQHQEAEREPRPMYPRRRKT. A compositionally biased stretch (basic and acidic residues) spans 160–169; the sequence is QHQEAEREPR.

Belongs to the endothelin/sarafotoxin family.

Its subcellular location is the secreted. In terms of biological role, endothelins are endothelium-derived vasoconstrictor peptides. The chain is Endothelin-2 (EDN2) from Mustela putorius furo (European domestic ferret).